A 408-amino-acid polypeptide reads, in one-letter code: Heparan-sulfate 6-O-sulfotransferase 1 (408 aa).

Over 8 to 14 (MVERTSK) the chain is Cytoplasmic. The chain crosses the membrane as a helical; Signal-anchor for type II membrane protein span at residues 15–35 (FLLIVAASVCFMLILYQYVGP). Residues 36–408 (GLSLGAPSGR…DYMSHIIEKW (373 aa)) are Lumenal-facing. 90-98 (HIQKTGGTT) is a binding site for 3'-phosphoadenylyl sulfate. Residues 120–121 (KK), Arg137, Trp142, and His147 contribute to the substrate site. Catalysis depends on His147, which acts as the Proton acceptor. Residues Arg182 and Ser190 each coordinate 3'-phosphoadenylyl sulfate. Substrate contacts are provided by His194 and Trp201. Residue Asn261 is glycosylated (N-linked (GlcNAc...) asparagine). 314–316 (MQY) is a binding site for 3'-phosphoadenylyl sulfate. Residue Asn317 is glycosylated (N-linked (GlcNAc...) asparagine). Residue 320–321 (RA) coordinates 3'-phosphoadenylyl sulfate. Asn328 is a glycosylation site (N-linked (GlcNAc...) asparagine). The stretch at 348–382 (AKDLFQQRYQYKRQLERMEQRIKNREERLLHRSNE) forms a coiled coil. The segment at 376–396 (LLHRSNEALPKEETEEQGRLP) is disordered.

The protein belongs to the sulfotransferase 6 family. Post-translationally, N-glycosylated.

The protein localises to the membrane. The catalysed reaction is alpha-D-glucosaminyl-[heparan sulfate](n) + 3'-phosphoadenylyl sulfate = 6-sulfo-alpha-D-glucosaminyl-[heparan sulfate](n) + adenosine 3',5'-bisphosphate + H(+). 6-O-sulfation enzyme which catalyzes the transfer of sulfate from 3'-phosphoadenosine 5'-phosphosulfate (PAPS) to position 6 of the N-sulfoglucosamine residue (GlcNS) of heparan sulfate. May also play a role in limb development. This chain is Heparan-sulfate 6-O-sulfotransferase 1, found in Gallus gallus (Chicken).